The chain runs to 616 residues: FAD-linked oxidoreductase cheF (616 aa).

The FAD-binding PCMH-type domain maps to 160 to 344 (NQGLVSPWYV…LSMTVRVEPA (185 aa)).

This sequence belongs to the oxygen-dependent FAD-linked oxidoreductase family. Requires FAD as cofactor.

Its pathway is secondary metabolite biosynthesis. Functionally, FAD-linked oxidoreductase; part of the gene cluster that mediates the biosynthesis of chaetoglobosin A which has a unique inhibitory activity against actin polymerization in mammalian cells. Chaetoglobosin A and its intermediates are involved in the morphological differentiation of C.globosum. The first step of the pathway is the synthesis of prochaetoglobosin I via condensation of one acetyl-CoA, 8 malonyl-CoA, and a L-tryptophan molecule by the PKS-NRPS hybrid synthetase cheA, followed by reduction of backbone double bond to install desired geometry by the enoyl reductase cheB. Further multiple oxidation steps performed by the cytochrome P450 monooxygenases cheE and cheG, as well as by the FAD-linked oxidoreductase cheF, lead to the formation of chaetoglobosin A. Depending on the order of action of these reductases, distinct intermediates can be identified. Within the pathway, the cytochrome P450 monooxygenase cheE catalyzes a stereospecific epoxidation on prochaetoglobosin I, cytoglobosin D, and chaetoglobosin J intermediates. The FAD-linked oxidoreductase cheF performs dehydrogenation of the C-20 hydroxyl groups in the 20-dihyrochaetoglobosin A and cytoglobosin D intermediates. Finally, the cytochrome P450 monooxygenase cheG can catalyze the stereospecific dihydroxylation of prochaetoglobosin I and prochaetoglobosin IV at C-19 and C-20, respectively. The Diels-Alderase cheD may play a role in the post-PKS-NRPS biosynthetic steps catalyzing Diels-Alder cyclization. The chain is FAD-linked oxidoreductase cheF from Chaetomium globosum (strain ATCC 6205 / CBS 148.51 / DSM 1962 / NBRC 6347 / NRRL 1970) (Soil fungus).